The following is a 246-amino-acid chain: ABC transporter ATP-binding protein NatA (246 aa).

Positions 2 to 237 constitute an ABC transporter domain; sequence ITLTDCSRRF…ERSEDLNYIF (236 aa). An ATP-binding site is contributed by 38 to 45; it reads GENGAGKT.

It belongs to the ABC transporter superfamily. In terms of assembly, the complex is composed of NatA and NatB.

It catalyses the reaction Na(+)(in) + ATP + H2O = Na(+)(out) + ADP + phosphate + H(+). In terms of biological role, part of an ABC transporter that catalyzes ATP-dependent electrogenic sodium extrusion. This Bacillus subtilis (strain 168) protein is ABC transporter ATP-binding protein NatA.